Consider the following 247-residue polypeptide: 14-3-3 protein gamma-A (247 aa).

This sequence belongs to the 14-3-3 family. As to quaternary structure, homodimer, and heterodimer with other family members.

Its subcellular location is the cytoplasm. Adapter protein implicated in the regulation of a large spectrum of both general and specialized signaling pathways. Binds to a large number of partners, usually by recognition of a phosphoserine or phosphothreonine motif. Binding generally results in the modulation of the activity of the binding partner. In Xenopus laevis (African clawed frog), this protein is 14-3-3 protein gamma-A (ywhag-a).